The following is a 413-amino-acid chain: Variant surface glycoprotein YnAT 1.3 (413 aa).

An N-terminal signal peptide occupies residues 1–22 (MLDNSRARSIVHLLILLKAHVI). N91, N361, and N379 each carry an N-linked (GlcNAc...) asparagine glycan. N379 carries GPI-anchor amidated asparagine lipidation. A propeptide spans 380-413 (SSNPTSRQNSVVQEPTTVSAAAITPLILPWTLLI) (removed in mature form).

The protein localises to the cell membrane. Functionally, VSG forms a coat on the surface of the parasite. The trypanosome evades the immune response of the host by expressing a series of antigenically distinct VSGs from an estimated 1000 VSG genes. The polypeptide is Variant surface glycoprotein YnAT 1.3 (Trypanosoma congolense).